Reading from the N-terminus, the 211-residue chain is ATP phosphoribosyltransferase (211 aa).

Belongs to the ATP phosphoribosyltransferase family. Short subfamily. In terms of assembly, heteromultimer composed of HisG and HisZ subunits.

The protein resides in the cytoplasm. The catalysed reaction is 1-(5-phospho-beta-D-ribosyl)-ATP + diphosphate = 5-phospho-alpha-D-ribose 1-diphosphate + ATP. It functions in the pathway amino-acid biosynthesis; L-histidine biosynthesis; L-histidine from 5-phospho-alpha-D-ribose 1-diphosphate: step 1/9. In terms of biological role, catalyzes the condensation of ATP and 5-phosphoribose 1-diphosphate to form N'-(5'-phosphoribosyl)-ATP (PR-ATP). Has a crucial role in the pathway because the rate of histidine biosynthesis seems to be controlled primarily by regulation of HisG enzymatic activity. The polypeptide is ATP phosphoribosyltransferase (Bacillus cereus (strain B4264)).